The chain runs to 83 residues: Large ribosomal subunit protein eL43 (83 aa).

Zn(2+) contacts are provided by cysteine 38, cysteine 41, cysteine 56, and cysteine 59. The C4-type zinc-finger motif lies at 38 to 59 (CKKCGKKAVKRSGTGIWECRHC).

This sequence belongs to the eukaryotic ribosomal protein eL43 family. Putative zinc-binding subfamily. Part of the 50S ribosomal subunit. Zn(2+) is required as a cofactor.

Functionally, binds to the 23S rRNA. The polypeptide is Large ribosomal subunit protein eL43 (Archaeoglobus fulgidus (strain ATCC 49558 / DSM 4304 / JCM 9628 / NBRC 100126 / VC-16)).